The sequence spans 709 residues: Polyribonucleotide nucleotidyltransferase (709 aa).

Mg(2+) contacts are provided by D486 and D492. Residues 553 to 612 (PRIHTIKINADKIKDVIGKGGSVIRALTEETGTTIEIEDDGTVKIAATSGEQAKQAIARI) form the KH domain. The S1 motif domain occupies 622 to 690 (GRIYNGKVTR…RQGRIRLSMK (69 aa)). The interval 690 to 709 (KEAQATQQEAAETSSEDPAN) is disordered. Low complexity predominate over residues 691 to 702 (EAQATQQEAAET).

This sequence belongs to the polyribonucleotide nucleotidyltransferase family. In terms of assembly, component of the RNA degradosome, which is a multiprotein complex involved in RNA processing and mRNA degradation. The cofactor is Mg(2+).

The protein localises to the cytoplasm. The catalysed reaction is RNA(n+1) + phosphate = RNA(n) + a ribonucleoside 5'-diphosphate. Its function is as follows. Involved in mRNA degradation. Catalyzes the phosphorolysis of single-stranded polyribonucleotides processively in the 3'- to 5'-direction. In Proteus mirabilis (strain HI4320), this protein is Polyribonucleotide nucleotidyltransferase.